The sequence spans 411 residues: NAD-dependent dihydropyrimidine dehydrogenase subunit PreA (411 aa).

Residues Asn-76 and 134 to 136 (NFS) contribute to the substrate site. Catalysis depends on Cys-137, which acts as the Nucleophile. 201–202 (NT) provides a ligand contact to substrate. 2 consecutive 4Fe-4S ferredoxin-type domains span residues 335-367 (VYPR…WSEK) and 369-398 (RTPH…LGEV). [4Fe-4S] cluster-binding residues include Cys-344, Cys-347, Cys-350, Cys-354, Cys-378, Cys-381, Cys-384, and Cys-388.

This sequence belongs to the dihydropyrimidine dehydrogenase family. As to quaternary structure, heterotetramer of 2 PreA and 2 PreT subunits. It depends on [4Fe-4S] cluster as a cofactor.

The enzyme catalyses 5,6-dihydrouracil + NAD(+) = uracil + NADH + H(+). It catalyses the reaction 5,6-dihydrothymine + NAD(+) = thymine + NADH + H(+). Functionally, involved in pyrimidine base degradation. Catalyzes physiologically the reduction of uracil to 5,6-dihydrouracil (DHU) by using NADH as a specific cosubstrate. It also catalyzes the reverse reaction and the reduction of thymine to 5,6-dihydrothymine (DHT). The protein is NAD-dependent dihydropyrimidine dehydrogenase subunit PreA (preA) of Escherichia coli O157:H7.